Here is a 102-residue protein sequence, read N- to C-terminus: Small ribosomal subunit protein uS10 (102 aa).

Belongs to the universal ribosomal protein uS10 family. Part of the 30S ribosomal subunit.

Functionally, involved in the binding of tRNA to the ribosomes. This is Small ribosomal subunit protein uS10 from Methylobacillus flagellatus (strain ATCC 51484 / DSM 6875 / VKM B-1610 / KT).